The following is a 56-amino-acid chain: Large ribosomal subunit protein bL32 (56 aa).

Residues 1 to 37 form a disordered region; the sequence is MAVQQNKKSRSRRDMRRSHDALTTAAVSVDKTTGETH. Over residues 7-16 the composition is skewed to basic residues; the sequence is KKSRSRRDMR.

Belongs to the bacterial ribosomal protein bL32 family.

The polypeptide is Large ribosomal subunit protein bL32 (Haemophilus ducreyi (strain 35000HP / ATCC 700724)).